The chain runs to 499 residues: Nucleoside transporter 2 (499 aa).

The Cytoplasmic portion of the chain corresponds to 1-30; it reads MTGQSAAVEGSNSALPWYRMGFHTLAEFNT. A run of 5 helical transmembrane segments spans residues 31-51, 112-132, 133-153, 179-199, and 212-232; these read YVTFVLLGMSIMMVTSAVTSA, LFLGLGIPFVELVVIIAVPAA, TIPTQNGAIAVIMVVAMMGGL, WGLTVIALFMSIIQIILQVSM, and IYFGIGIGIQVMAIAALVLLR. Residues 255–267 show a composition bias toward basic and acidic residues; that stretch reads VEPEESQDSKEPA. The disordered stretch occupies residues 255-276; it reads VEPEESQDSKEPATGDVAEAPK. Asn-326 is a glycosylation site (N-linked (GlcNAc...) asparagine). The next 5 helical transmembrane spans lie at 350-370, 378-398, 406-426, 428-448, and 475-495; these read LCAFTIFFTTLLVFPGVFFLV, MTIIVTLFNAGDFVARVLLMI, KLVIVGTFGRLAVIPLIVLCV, GFIPGVALPYVLIFLFGLTNG, and MLAGISLMLGLCFGSNMSLAI.

Belongs to the SLC29A/ENT transporter (TC 2.A.57) family.

The protein resides in the cell membrane. Its subcellular location is the cell projection. It localises to the cilium. It is found in the flagellum. The catalysed reaction is inosine(in) + H(+)(in) = inosine(out) + H(+)(out). It carries out the reaction guanosine(in) + H(+)(in) = guanosine(out) + H(+)(out). It catalyses the reaction xanthosine(in) + H(+)(in) = xanthosine(out) + H(+)(out). High affinity nucleoside:H(+) symporter; transports inosine and guanosine. Can transport xanthosine. The chain is Nucleoside transporter 2 from Leishmania donovani.